We begin with the raw amino-acid sequence, 390 residues long: GTPase Obg (390 aa).

An Obg domain is found at 1–159; sequence MKFVDEASIL…RELLLELMLL (159 aa). The segment at 127–147 is disordered; it reads NTRFKSSVNRTPRQKTNGTPG. Residues 129 to 145 are compositionally biased toward polar residues; that stretch reads RFKSSVNRTPRQKTNGT. One can recognise an OBG-type G domain in the interval 160–333; the sequence is ADVGMLGMPN…LCWDVMTFII (174 aa). GTP contacts are provided by residues 166-173, 191-195, 213-216, 283-286, and 314-316; these read GMPNAGKS, FTTLV, DIPG, NKID, and SAA. Residues serine 173 and threonine 193 each coordinate Mg(2+).

This sequence belongs to the TRAFAC class OBG-HflX-like GTPase superfamily. OBG GTPase family. In terms of assembly, monomer. Requires Mg(2+) as cofactor.

The protein resides in the cytoplasm. An essential GTPase which binds GTP, GDP and possibly (p)ppGpp with moderate affinity, with high nucleotide exchange rates and a fairly low GTP hydrolysis rate. Plays a role in control of the cell cycle, stress response, ribosome biogenesis and in those bacteria that undergo differentiation, in morphogenesis control. The chain is GTPase Obg from Escherichia coli (strain K12 / DH10B).